Here is a 199-residue protein sequence, read N- to C-terminus: Inner membrane protein E199L (199 aa).

Residues 150 to 170 form a helical membrane-spanning segment; the sequence is INVMNHPFLTLILIILILIII.

It belongs to the asfivirus E199L family. As to quaternary structure, interacts with host PYCR2; this interaction results in autophagy activation. Contains intramolecular disulfide bonds.

The protein resides in the virion membrane. Its subcellular location is the host membrane. Essential for viral fusion with host endosomal membrane and core release. Not required for virus morphogenesis and egress. Induces complete autophagy through the interaction with and down-regulation of host PYCR2. In Ornithodoros (relapsing fever ticks), this protein is Inner membrane protein E199L.